Here is a 307-residue protein sequence, read N- to C-terminus: Aspartate carbamoyltransferase catalytic subunit (307 aa).

Carbamoyl phosphate is bound by residues arginine 59 and threonine 60. Lysine 87 contributes to the L-aspartate binding site. Carbamoyl phosphate is bound by residues arginine 109, histidine 137, and glutamine 140. L-aspartate is bound by residues arginine 170 and arginine 224. 2 residues coordinate carbamoyl phosphate: glycine 265 and proline 266.

The protein belongs to the aspartate/ornithine carbamoyltransferase superfamily. ATCase family. As to quaternary structure, heterododecamer (2C3:3R2) of six catalytic PyrB chains organized as two trimers (C3), and six regulatory PyrI chains organized as three dimers (R2).

The catalysed reaction is carbamoyl phosphate + L-aspartate = N-carbamoyl-L-aspartate + phosphate + H(+). The protein operates within pyrimidine metabolism; UMP biosynthesis via de novo pathway; (S)-dihydroorotate from bicarbonate: step 2/3. Its function is as follows. Catalyzes the condensation of carbamoyl phosphate and aspartate to form carbamoyl aspartate and inorganic phosphate, the committed step in the de novo pyrimidine nucleotide biosynthesis pathway. The sequence is that of Aspartate carbamoyltransferase catalytic subunit from Cytophaga hutchinsonii (strain ATCC 33406 / DSM 1761 / CIP 103989 / NBRC 15051 / NCIMB 9469 / D465).